The chain runs to 76 residues: Large ribosomal subunit protein uL29 (76 aa).

It belongs to the universal ribosomal protein uL29 family.

The protein is Large ribosomal subunit protein uL29 of Corynebacterium diphtheriae (strain ATCC 700971 / NCTC 13129 / Biotype gravis).